Here is a 485-residue protein sequence, read N- to C-terminus: Cysteine protease atg4da (485 aa).

The disordered stretch occupies residues 22 to 46 (ASASSKRHLGHGAVPDGIREGSGEP). C131 (nucleophile) is an active-site residue. Catalysis depends on residues D368 and H370.

Belongs to the peptidase C54 family.

It localises to the cytoplasm. The catalysed reaction is [protein]-C-terminal L-amino acid-glycyl-phosphatidylethanolamide + H2O = [protein]-C-terminal L-amino acid-glycine + a 1,2-diacyl-sn-glycero-3-phosphoethanolamine. It carries out the reaction [protein]-C-terminal L-amino acid-glycyl-phosphatidylserine + H2O = [protein]-C-terminal L-amino acid-glycine + a 1,2-diacyl-sn-glycero-3-phospho-L-serine. In terms of biological role, cysteine protease that plays a key role in autophagy by mediating both proteolytic activation and delipidation of ATG8 family proteins. The protease activity is required for proteolytic activation of ATG8 family proteins to reveal a C-terminal glycine. Exposure of the glycine at the C-terminus is essential for ATG8 proteins conjugation to phosphatidylethanolamine (PE) and insertion to membranes, which is necessary for autophagy. In addition to the protease activity, also mediates delipidation of ATG8 family proteins. Catalyzes delipidation of PE-conjugated forms of ATG8 proteins during macroautophagy. Also involved in non-canonical autophagy, a parallel pathway involving conjugation of ATG8 proteins to single membranes at endolysosomal compartments, by catalyzing delipidation of ATG8 proteins conjugated to phosphatidylserine (PS). ATG4D plays a role in the autophagy-mediated neuronal homeostasis in the central nervous system. The sequence is that of Cysteine protease atg4da from Danio rerio (Zebrafish).